A 381-amino-acid polypeptide reads, in one-letter code: Succinyl-diaminopimelate desuccinylase (381 aa).

Histidine 72 provides a ligand contact to Zn(2+). Aspartate 74 is an active-site residue. Residue aspartate 105 coordinates Zn(2+). Glutamate 139 functions as the Proton acceptor in the catalytic mechanism. Positions 140, 168, and 354 each coordinate Zn(2+).

The protein belongs to the peptidase M20A family. DapE subfamily. Homodimer. The cofactor is Zn(2+). Requires Co(2+) as cofactor.

It catalyses the reaction N-succinyl-(2S,6S)-2,6-diaminopimelate + H2O = (2S,6S)-2,6-diaminopimelate + succinate. It functions in the pathway amino-acid biosynthesis; L-lysine biosynthesis via DAP pathway; LL-2,6-diaminopimelate from (S)-tetrahydrodipicolinate (succinylase route): step 3/3. Catalyzes the hydrolysis of N-succinyl-L,L-diaminopimelic acid (SDAP), forming succinate and LL-2,6-diaminopimelate (DAP), an intermediate involved in the bacterial biosynthesis of lysine and meso-diaminopimelic acid, an essential component of bacterial cell walls. The polypeptide is Succinyl-diaminopimelate desuccinylase (Shewanella sp. (strain ANA-3)).